Consider the following 207-residue polypeptide: Small ribosomal subunit protein uS4 (207 aa).

Positions 29–38 are enriched in basic and acidic residues; the sequence is SDKAKFDSKP. Positions 29–54 are disordered; sequence SDKAKFDSKPGQHGRTSGTRTSDYGL. Polar residues predominate over residues 42–52; that stretch reads GRTSGTRTSDY. The region spanning 97 to 160 is the S4 RNA-binding domain; it reads SRLDNVVYRM…KKQTRIAEAL (64 aa).

The protein belongs to the universal ribosomal protein uS4 family. In terms of assembly, part of the 30S ribosomal subunit. Contacts protein S5. The interaction surface between S4 and S5 is involved in control of translational fidelity.

In terms of biological role, one of the primary rRNA binding proteins, it binds directly to 16S rRNA where it nucleates assembly of the body of the 30S subunit. Its function is as follows. With S5 and S12 plays an important role in translational accuracy. This is Small ribosomal subunit protein uS4 from Polaromonas naphthalenivorans (strain CJ2).